We begin with the raw amino-acid sequence, 101 residues long: Urease subunit beta (101 aa).

This sequence belongs to the urease beta subunit family. As to quaternary structure, heterotrimer of UreA (gamma), UreB (beta) and UreC (alpha) subunits. Three heterotrimers associate to form the active enzyme.

It is found in the cytoplasm. The enzyme catalyses urea + 2 H2O + H(+) = hydrogencarbonate + 2 NH4(+). It participates in nitrogen metabolism; urea degradation; CO(2) and NH(3) from urea (urease route): step 1/1. In Albidiferax ferrireducens (strain ATCC BAA-621 / DSM 15236 / T118) (Rhodoferax ferrireducens), this protein is Urease subunit beta.